Consider the following 316-residue polypeptide: Malate dehydrogenase (316 aa).

NAD(+) is bound by residues 12–17 and Asp-36; that span reads GAGNIG. Arg-85 and Arg-91 together coordinate substrate. NAD(+) is bound by residues Asn-98 and 121 to 123; that span reads VTN. Asn-123 and Arg-154 together coordinate substrate. Catalysis depends on His-178, which acts as the Proton acceptor.

This sequence belongs to the LDH/MDH superfamily. MDH type 3 family.

The catalysed reaction is (S)-malate + NAD(+) = oxaloacetate + NADH + H(+). Catalyzes the reversible oxidation of malate to oxaloacetate. The protein is Malate dehydrogenase of Wolbachia pipientis wMel.